The sequence spans 189 residues: Interferon alpha-1/13 (189 aa).

An N-terminal signal peptide occupies residues 1–23; sequence MASPFALLMVLVVLSCKSSCSLG. Intrachain disulfides connect cysteine 24-cysteine 122 and cysteine 52-cysteine 162.

This sequence belongs to the alpha/beta interferon family. As to quaternary structure, interacts with CR2.

Its subcellular location is the secreted. Functionally, produced by macrophages, IFN-alpha have antiviral activities. Interferon stimulates the production of two enzymes: a protein kinase and an oligoadenylate synthetase. This is Interferon alpha-1/13 (IFNA1) from Homo sapiens (Human).